The chain runs to 357 residues: MSGPSSWRRAATVMLAAGWTHSSPAGFRLLLLQRSQNQRFIPGAHVFPGGVLDAADSSPDWVRLFAPRHTPPRFGLGPEPPRQPPFPGLSHGDADPAALPDDVALRICAIRETFEEAGVLLLRPRDADPASQEPSQALSPPAGLAEWRSRVRSDPRCFLQLCAHLDCTPDIWALHDWGGWLTPYGRITRRFDTTFLLCCLRDTPRVEPDLAEVVGYQWLSPSEATECFLSKEIWLAPPQFYEIRRLDNFASLSALYRFCSDRPLEGGEKWLPIILLTSDGTIHLLPGDELYVKDSDFLEKNMSTDKKTEEIVKEGKVLNRVVIHSPYVYEIYMTLPSENKHVYPRNYVVNKRCTAHL.

Residues 10–242 enclose the Nudix hydrolase domain; it reads AATVMLAAGW…IWLAPPQFYE (233 aa). The disordered stretch occupies residues 72-94; sequence PRFGLGPEPPRQPPFPGLSHGDA. Residues 78–87 show a composition bias toward pro residues; the sequence is PEPPRQPPFP. The Nudix box motif lies at 97 to 118; it reads AALPDDVALRICAIRETFEEAG. Residues Glu-112 and Glu-116 each contribute to the Mg(2+) site. Lys-300 bears the N6-succinyllysine mark. Residues 355-357 carry the Microbody targeting signal motif; sequence AHL.

The protein belongs to the Nudix hydrolase family. Monomer. The cofactor is Mg(2+). It depends on Mn(2+) as a cofactor.

It localises to the peroxisome. The catalysed reaction is an acyl-CoA + H2O = an acyl-4'-phosphopantetheine + adenosine 3',5'-bisphosphate + 2 H(+). It catalyses the reaction CoA + H2O = (R)-4'-phosphopantetheine + adenosine 3',5'-bisphosphate + 2 H(+). The enzyme catalyses hexanoyl-CoA + H2O = hexanoyl-4'-phosphopantetheine + adenosine 3',5'-bisphosphate + 2 H(+). It carries out the reaction octanoyl-CoA + H2O = S-octanoyl-4'-phosphopantetheine + adenosine 3',5'-bisphosphate + 2 H(+). The catalysed reaction is butanoyl-CoA + H2O = S-butanoyl-4'-phosphopantetheine + adenosine 3',5'-bisphosphate + 2 H(+). It catalyses the reaction propanoyl-CoA + H2O = propanoyl-4'-phosphopantetheine + adenosine 3',5'-bisphosphate + 2 H(+). The enzyme catalyses malonyl-CoA + H2O = malonyl-4'-phosphopantetheine + adenosine 3',5'-bisphosphate + 2 H(+). It carries out the reaction succinyl-CoA + H2O = succinyl-4'-phosphopantetheine + adenosine 3',5'-bisphosphate + 2 H(+). The catalysed reaction is choloyl-CoA + H2O = S-choloyl-4'-phosphopantetheine + adenosine 3',5'-bisphosphate + 2 H(+). It catalyses the reaction 4,8-dimethylnonanoyl-CoA + H2O = S-(4,8-dimethylnonanoyl)-4'-phosphopantetheine + adenosine 3',5'-bisphosphate + 2 H(+). The enzyme catalyses (9Z,12Z,15Z)-octadecatrienoyl-CoA + H2O = S-(9Z,12Z,15Z-octadecatrienoyl)-4'-phosphopantetheine + adenosine 3',5'-bisphosphate + 2 H(+). It carries out the reaction (9Z,12Z)-octadecadienoyl-CoA + H2O = S-(9Z,12Z-octadecadienoyl)-4'-phosphopantetheine + adenosine 3',5'-bisphosphate + 2 H(+). The catalysed reaction is (9Z)-hexadecenoyl-CoA + H2O = S-(9Z-hexadecenoyl)-4'-phosphopantetheine + adenosine 3',5'-bisphosphate + 2 H(+). It catalyses the reaction (9Z)-tetradecenoyl-CoA + H2O = S-(9Z-tetradecenoyl)-4'-phosphopantetheine + adenosine 3',5'-bisphosphate + 2 H(+). The enzyme catalyses (6Z)-octenoyl-CoA + H2O = S-(6Z-octenoyl)-4'-phosphopantetheine + adenosine 3',5'-bisphosphate + 2 H(+). It carries out the reaction hexadecanoyl-CoA + H2O = S-hexadecanoyl-4'-phosphopantetheine + adenosine 3',5'-bisphosphate + 2 H(+). The catalysed reaction is tetradecanoyl-CoA + H2O = tetradecanoyl-4'-phosphopantetheine + adenosine 3',5'-bisphosphate + 2 H(+). It catalyses the reaction dodecanoyl-CoA + H2O = S-dodecanoyl-4'-phosphopantetheine + adenosine 3',5'-bisphosphate + 2 H(+). The enzyme catalyses a 5'-end CoA-ribonucleoside in mRNA + H2O = a 5'-end phospho-adenosine-phospho-ribonucleoside in mRNA + (R)-4'-phosphopantetheine + 2 H(+). Its function is as follows. Fatty acyl-coenzyme A (CoA) diphosphatase that hydrolyzes fatty acyl-CoA to yield acyl-4'-phosphopantetheine and adenosine 3',5'-bisphosphate. Mediates the hydrolysis of a wide range of CoA esters, including choloyl-CoA and branched-chain fatty-acyl-CoA esters and at low substrate concentrations medium and long-chain fatty-acyl-CoA esters are the primary substrates. Highest activity seen with medium-chain acyl-CoA esters and higher rates of activity seen with the unsaturated acyl-CoA esters compared with the saturated esters. Exhibits decapping activity towards dpCoA-capped RNAs in vitro. This is Acyl-coenzyme A diphosphatase NUDT19 (Nudt19) from Mus caroli (Ryukyu mouse).